The primary structure comprises 789 residues: Probable 3-hydroxyacyl-CoA dehydrogenase (789 aa).

It belongs to the 3-hydroxyacyl-CoA dehydrogenase family.

It catalyses the reaction a (3S)-3-hydroxyacyl-CoA + NAD(+) = a 3-oxoacyl-CoA + NADH + H(+). The protein operates within lipid metabolism; fatty acid beta-oxidation. In terms of biological role, involved in the degradation of long-chain fatty acids. The sequence is that of Probable 3-hydroxyacyl-CoA dehydrogenase (fadN) from Bacillus subtilis (strain 168).